A 62-amino-acid polypeptide reads, in one-letter code: UPF0434 protein Arad_4458 (62 aa).

It belongs to the UPF0434 family.

This Rhizobium rhizogenes (strain K84 / ATCC BAA-868) (Agrobacterium radiobacter) protein is UPF0434 protein Arad_4458.